A 165-amino-acid chain; its full sequence is UI (165 aa).

The signal sequence occupies residues 1–18 (MKPVPLILLLATVLLSSH). Valine 163 is subject to Valine amide.

This sequence belongs to the sauvagine/corticotropin-releasing factor/urotensin I family.

The protein resides in the secreted. In terms of biological role, urotensin is found in the teleost caudal neurosecretory system. It has a suggested role in osmoregulation and as a corticotropin-releasing factor. The non-hormonal portion of this precursor may be a urotensin binding protein, urophysin. The protein is UI of Oncorhynchus mykiss (Rainbow trout).